Consider the following 401-residue polypeptide: Voltage-gated potassium channel subunit beta-1 (401 aa).

NADP(+) contacts are provided by Thr90, Trp91, Gln97, and Asp119. The active-site Proton donor/acceptor is Tyr124. NADP(+) is bound by residues Asn192, Ser222, Arg223, Gln248, Trp277, Ser278, Pro279, Leu280, Ala281, Cys282, Lys288, Arg298, Gly357, Ser359, Gln363, Glu366, and Asn367.

It belongs to the shaker potassium channel beta subunit family. Homotetramer. Interaction with tetrameric potassium channel alpha subunits gives rise to a heterooctamer.

Its subcellular location is the cytoplasm. The protein localises to the membrane. It is found in the cell membrane. The enzyme catalyses a primary alcohol + NADP(+) = an aldehyde + NADPH + H(+). It catalyses the reaction a secondary alcohol + NADP(+) = a ketone + NADPH + H(+). Functionally, regulatory subunit of the voltage-gated potassium (Kv) channels composed of pore-forming and potassium-conducting alpha subunits and of regulatory beta subunits. The beta-1/KCNAB1 cytoplasmic subunit mediates closure of delayed rectifier potassium channels by physically obstructing the pore via its N-terminal domain and increases the speed of channel closure for other family members. Promotes the inactivation of KCNA1, KCNA2, KCNA4, KCNA5 and KCNA6 alpha subunit-containing channels. Displays nicotinamide adenine dinucleotide phosphate (NADPH)-dependent aldoketoreductase activity by catalyzing the NADPH-dependent reduction of a variety of endogenous aldehydes and ketones. The binding of NADPH is required for efficient down-regulation of potassium channel activity. Oxidation of the bound NADPH restrains N-terminal domain from blocking the channel, thereby decreasing N-type inactivation of potassium channel activity. This is Voltage-gated potassium channel subunit beta-1 (KCNAB1) from Gallus gallus (Chicken).